The following is a 336-amino-acid chain: MSKHFFLHNEFHWQGRHDAEDGAAGSRVHHVVQQIDYTHIGENPYGVALLGFACDAGVARNKGRIGAKKSPDLIRRALANLAWHSPHPLYDLGTVVCDDDLLESSQQHCAKMIAEVLPSVPVITLGGGHEVAWASFSGLARYFEQHHPEKAPKIGIINFDAHFDLRAFSSSQADIKPSSGTPFNQIQHYCQQQGWDFHYACLGVSKASNTRALFERAEQLNVWFVEDKDLGSVNHDYHLTQLQHFIDDCDYLYLTIDLDVFPAATAPGVSAPAARGVSYDNLAPFLDRILAHRDKLMLADIAEYNPTYDVDSQTARLAARLCWDIANAMNDKLEHQ.

Mn(2+) contacts are provided by His-129, Asp-160, His-162, Asp-164, Asp-257, and Asp-259.

It belongs to the arginase family. Requires Mn(2+) as cofactor.

The enzyme catalyses N-formimidoyl-L-glutamate + H2O = formamide + L-glutamate. It participates in amino-acid degradation; L-histidine degradation into L-glutamate; L-glutamate from N-formimidoyl-L-glutamate (hydrolase route): step 1/1. Functionally, catalyzes the conversion of N-formimidoyl-L-glutamate to L-glutamate and formamide. The polypeptide is Formimidoylglutamase (Vibrio vulnificus (strain CMCP6)).